We begin with the raw amino-acid sequence, 329 residues long: 4-hydroxythreonine-4-phosphate dehydrogenase (329 aa).

Substrate contacts are provided by His-136 and Thr-137. Positions 166, 211, and 266 each coordinate a divalent metal cation. Residues Lys-274, Asn-283, and Arg-292 each coordinate substrate.

It belongs to the PdxA family. As to quaternary structure, homodimer. Zn(2+) is required as a cofactor. Mg(2+) serves as cofactor. Requires Co(2+) as cofactor.

The protein resides in the cytoplasm. It catalyses the reaction 4-(phosphooxy)-L-threonine + NAD(+) = 3-amino-2-oxopropyl phosphate + CO2 + NADH. Its pathway is cofactor biosynthesis; pyridoxine 5'-phosphate biosynthesis; pyridoxine 5'-phosphate from D-erythrose 4-phosphate: step 4/5. Catalyzes the NAD(P)-dependent oxidation of 4-(phosphooxy)-L-threonine (HTP) into 2-amino-3-oxo-4-(phosphooxy)butyric acid which spontaneously decarboxylates to form 3-amino-2-oxopropyl phosphate (AHAP). In Escherichia coli O81 (strain ED1a), this protein is 4-hydroxythreonine-4-phosphate dehydrogenase.